The primary structure comprises 281 residues: Phosphatidylglycerol--prolipoprotein diacylglyceryl transferase (281 aa).

The next 4 membrane-spanning stretches (helical) occupy residues valine 23–tryptophan 43, phenylalanine 71–tyrosine 91, tryptophan 107–phenylalanine 127, and isoleucine 133–valine 153. Arginine 154 serves as a coordination point for a 1,2-diacyl-sn-glycero-3-phospho-(1'-sn-glycerol). The next 3 membrane-spanning stretches (helical) occupy residues leucine 189–valine 209, glycine 217–phenylalanine 237, and leucine 247–leucine 267.

Belongs to the Lgt family.

The protein localises to the cell inner membrane. It carries out the reaction L-cysteinyl-[prolipoprotein] + a 1,2-diacyl-sn-glycero-3-phospho-(1'-sn-glycerol) = an S-1,2-diacyl-sn-glyceryl-L-cysteinyl-[prolipoprotein] + sn-glycerol 1-phosphate + H(+). It participates in protein modification; lipoprotein biosynthesis (diacylglyceryl transfer). Its function is as follows. Catalyzes the transfer of the diacylglyceryl group from phosphatidylglycerol to the sulfhydryl group of the N-terminal cysteine of a prolipoprotein, the first step in the formation of mature lipoproteins. In Brucella anthropi (strain ATCC 49188 / DSM 6882 / CCUG 24695 / JCM 21032 / LMG 3331 / NBRC 15819 / NCTC 12168 / Alc 37) (Ochrobactrum anthropi), this protein is Phosphatidylglycerol--prolipoprotein diacylglyceryl transferase.